The chain runs to 440 residues: Long-chain alkane monooxygenase (440 aa).

FMN-binding positions include aspartate 58, 137-138 (SH), tyrosine 158, and 227-230 (AGMS).

This sequence belongs to the NtaA/SnaA/DszA monooxygenase family. Homodimer.

The protein resides in the secreted. It carries out the reaction a long-chain alkane + FMNH2 + O2 = a long chain fatty alcohol + FMN + H2O + H(+). Functionally, involved in the degradation of long-chain alkanes. Converts alkanes ranging from C(15) to C(36) into their corresponding primary alcohols. The polypeptide is Long-chain alkane monooxygenase (Geobacillus thermodenitrificans (strain NG80-2)).